The following is a 562-amino-acid chain: Putative transport protein Spro_1639 (562 aa).

5 consecutive transmembrane segments (helical) span residues 8 to 28 (LLNG…LCLG), 37 to 57 (LGNS…HFAI), 66 to 86 (FMLF…SIFF), 94 to 114 (MLAL…GKLF), and 158 to 178 (HLSL…IFGA). RCK C-terminal domains follow at residues 202-288 (LDTD…SFRN) and 290-373 (KEVF…KIGF). The next 5 helical transmembrane spans lie at 383 to 403 (LLAF…TIQF), 406 to 426 (FSFG…LGFL), 447 to 467 (FGLM…IGNS), 475 to 495 (MLIA…LFGA), and 541 to 561 (IANV…PGIL).

Belongs to the AAE transporter (TC 2.A.81) family. YbjL subfamily.

Its subcellular location is the cell membrane. This chain is Putative transport protein Spro_1639, found in Serratia proteamaculans (strain 568).